Reading from the N-terminus, the 604-residue chain is Threonine--tRNA ligase (604 aa).

Positions 210-501 (DHRKIGTEME…LTEHYAGEFP (292 aa)) are catalytic. Residues C302, H353, and H478 each contribute to the Zn(2+) site.

It belongs to the class-II aminoacyl-tRNA synthetase family. As to quaternary structure, homodimer. Requires Zn(2+) as cofactor.

It localises to the cytoplasm. The enzyme catalyses tRNA(Thr) + L-threonine + ATP = L-threonyl-tRNA(Thr) + AMP + diphosphate + H(+). In terms of biological role, catalyzes the attachment of threonine to tRNA(Thr) in a two-step reaction: L-threonine is first activated by ATP to form Thr-AMP and then transferred to the acceptor end of tRNA(Thr). Also edits incorrectly charged L-seryl-tRNA(Thr). This Sulfurovum sp. (strain NBC37-1) protein is Threonine--tRNA ligase.